A 402-amino-acid chain; its full sequence is Centromere protein C (402 aa).

Lys-1 is covalently cross-linked (Glycyl lysine isopeptide (Lys-Gly) (interchain with G-Cter in SUMO2)). Over residues 1–12 (KSEQSSFSSSSS) the composition is skewed to low complexity. The segment at 1-118 (KSEQSSFSSS…HQKSQMSVET (118 aa)) is disordered. Ser-5 is subject to Phosphoserine. The Nuclear localization signal signature appears at 25–42 (QKPPAEKTNQSSKNIGKK). The segment covering 44–53 (APFKKQKRAN) has biased composition (basic residues). Over residues 88–118 (PNPSGDTGSSKNQDSMAAQNVHQKSQMSVET) the composition is skewed to polar residues. Lys-186 is covalently cross-linked (Glycyl lysine isopeptide (Lys-Gly) (interchain with G-Cter in SUMO2)). Residue Thr-193 is modified to Phosphothreonine. Residues 196 to 218 (VRRTMRTRSKPLEYWRGERIDYQ) are MIF2 homology domain II. 2 positions are modified to phosphoserine: Ser-222 and Ser-232. Positions 239 to 257 (KRKAKGNLGRIITTANRKR) match the Nuclear localization signal motif. A Glycyl lysine isopeptide (Lys-Gly) (interchain with G-Cter in SUMO2) cross-link involves residue Lys-266. The interval 349–402 (LVFYVNLGYLLCTLHETPYIVTTGDSFYVPSGNYYNIKNLLNEERVLLFTQIKS) is MIF2 homology domain III.

This sequence belongs to the CENP-C/MIF2 family. In terms of assembly, oligomer. Component of the CENPA-NAC complex, at least composed of CENPA, CENPC, CENPH, CENPM, CENPN, CENPT and CENPU. The CENPA-NAC complex interacts with the CENPA-CAD complex, composed of CENPI, CENPK, CENPL, CENPO, CENPP, CENPQ, CENPR and CENPS. Binds to DAXX. Interacts with DNMT3B. Interacts directly with CENPA. Identified in a centromere complex containing histones H2A, H2B and H4, and at least CENPA, CENPB, CENPC, CENPT, CENPN, HJURP, SUPT16H, SSRP1 and RSF1. Interacts with MEIKIN.

Its subcellular location is the nucleus. The protein resides in the chromosome. It is found in the centromere. It localises to the kinetochore. In terms of biological role, component of the CENPA-NAC (nucleosome-associated) complex, a complex that plays a central role in assembly of kinetochore proteins, mitotic progression and chromosome segregation. The CENPA-NAC complex recruits the CENPA-CAD (nucleosome distal) complex and may be involved in incorporation of newly synthesized CENPA into centromeres. CENPC recruits DNA methylation and DNMT3B to both centromeric and pericentromeric satellite repeats and regulates the histone code in these regions. In Ovis aries (Sheep), this protein is Centromere protein C (CENPC).